Here is a 136-residue protein sequence, read N- to C-terminus: Large ribosomal subunit protein uL16c (136 aa).

The protein belongs to the universal ribosomal protein uL16 family. As to quaternary structure, part of the 50S ribosomal subunit.

The protein localises to the plastid. It localises to the chloroplast. The sequence is that of Large ribosomal subunit protein uL16c from Guizotia abyssinica (Niger).